The sequence spans 78 residues: Putative protein PeaD (78 aa).

The protein belongs to the phage P protein family.

The protein is Putative protein PeaD (peaD) of Escherichia coli (strain K12).